The following is an 83-amino-acid chain: Small ribosomal subunit protein bS20 (83 aa).

Belongs to the bacterial ribosomal protein bS20 family.

Functionally, binds directly to 16S ribosomal RNA. The chain is Small ribosomal subunit protein bS20 from Flavobacterium johnsoniae (strain ATCC 17061 / DSM 2064 / JCM 8514 / BCRC 14874 / CCUG 350202 / NBRC 14942 / NCIMB 11054 / UW101) (Cytophaga johnsonae).